Consider the following 374-residue polypeptide: C-C chemokine receptor type 2 (374 aa).

Topologically, residues 1-42 (MLSTSRSRFIRNTNESGEEVTTFFDYDYGAPCHKFDVKQIGA) are extracellular. Asn14 carries an N-linked (GlcNAc...) asparagine glycan. Position 26 is a sulfotyrosine (Tyr26). A helical membrane pass occupies residues 43–70 (QLLPPLYSLVFIFGFVGNMLVVLILINC). The Cytoplasmic portion of the chain corresponds to 71-80 (KKLKCLTDIY). The chain crosses the membrane as a helical span at residues 81–100 (LLNLAISDLLFLITLPLWAH). Residues 101-114 (SAANEWVFGNAMCK) lie on the Extracellular side of the membrane. A disulfide bridge links Cys113 with Cys190. A helical transmembrane segment spans residues 115–136 (LFTGLYHIGYFGGIFFIILLTI). The Cytoplasmic portion of the chain corresponds to 137–153 (DRYLAIVHAVFALKART). The residue at position 139 (Tyr139) is a Phosphotyrosine; by JAK2. Residues 154-178 (VTFGVVTSVITWLVAVFASVPGIIF) form a helical membrane-spanning segment. Over 179–206 (TKCQKEDSVYVCGPYFPRGWNNFHTIMR) the chain is Extracellular. Residues 207 to 226 (NILGLVLPLLIMVICYSGIL) traverse the membrane as a helical segment. Residues 227-243 (KTLLRCRNEKKRHRAVR) lie on the Cytoplasmic side of the membrane. A helical transmembrane segment spans residues 244-268 (VIFTIMIVYFLFWTPYNIVILLNTF). The Extracellular segment spans residues 269–285 (QEFFGLSNCESTSQLDQ). A helical transmembrane segment spans residues 286–309 (ATQVTETLGMTHCCINPIIYAFVG). Topologically, residues 310–374 (EKFRSLFHIA…EASLQDKEGA (65 aa)) are cytoplasmic. The tract at residues 348–374 (QGLLDGRGKGKSIGRAPEASLQDKEGA) is disordered.

This sequence belongs to the G-protein coupled receptor 1 family. Interacts with ARRB1. Interacts (via extracellular N-terminal region) with beta-defensin DEFB106A/DEFB106B; this interaction may preferentially require specific tyrosine sulfation on CCR2. Interacts with NUP85; the interaction is required for CCR2 clusters formation on the cell membrane and CCR2 signaling. As to quaternary structure, (Microbial infection) Binds to HIV-1 Tat. N-glycosylated. Post-translationally, sulfation increases the affinity for both monomeric and dimeric CCL2 with stronger binding to the monomeric form. Binding of sulfated CCR2 to CCL2 promotes conversion of CCL2 from dimer to monomer. In terms of tissue distribution, expressed by monocytes and IL2-activated NK cells. Abundantly expressed on CD14+/CD16- monocytes and weakly on CD14+/CD16+ monocytes, type 2 dendritic cells (DCs) and plasmacytoid DCs (at protein level).

It localises to the cell membrane. Key functional receptor for CCL2 but can also bind CCL7, and CCL12. Also transduces signaling mediated by CCL13. Its binding with CCL2 on monocytes and macrophages mediates chemotaxis and migration induction through the activation of the PI3K cascade, the small G protein Rac and lamellipodium protrusion. Also acts as a receptor for the beta-defensin DEFB106A/DEFB106B. Regulates the expression of T-cell inflammatory cytokines and T-cell differentiation, promoting the differentiation of T-cells into T-helper 17 cells (Th17) during inflammation. Facilitates the export of mature thymocytes by enhancing directional movement of thymocytes to sphingosine-1-phosphate stimulation and up-regulation of S1P1R expression; signals through the JAK-STAT pathway to regulate FOXO1 activity leading to an increased expression of S1P1R. Plays an important role in mediating peripheral nerve injury-induced neuropathic pain. Increases NMDA-mediated synaptic transmission in both dopamine D1 and D2 receptor-containing neurons, which may be caused by MAPK/ERK-dependent phosphorylation of GRIN2B/NMDAR2B. Mediates the recruitment of macrophages and monocytes to the injury site following brain injury. In terms of biological role, (Microbial infection) Alternative coreceptor with CD4 for HIV-1 infection. The chain is C-C chemokine receptor type 2 (CCR2) from Homo sapiens (Human).